Consider the following 195-residue polypeptide: dITP/XTP pyrophosphatase (195 aa).

8-13 (SNNQGK) serves as a coordination point for substrate. Mg(2+)-binding residues include Glu-39 and Asp-68. Asp-68 functions as the Proton acceptor in the catalytic mechanism. Substrate-binding positions include Ser-69, 149–152 (FGYD), Lys-172, and 177–178 (HR).

It belongs to the HAM1 NTPase family. As to quaternary structure, homodimer. The cofactor is Mg(2+).

It catalyses the reaction XTP + H2O = XMP + diphosphate + H(+). The enzyme catalyses dITP + H2O = dIMP + diphosphate + H(+). The catalysed reaction is ITP + H2O = IMP + diphosphate + H(+). In terms of biological role, pyrophosphatase that catalyzes the hydrolysis of nucleoside triphosphates to their monophosphate derivatives, with a high preference for the non-canonical purine nucleotides XTP (xanthosine triphosphate), dITP (deoxyinosine triphosphate) and ITP. Seems to function as a house-cleaning enzyme that removes non-canonical purine nucleotides from the nucleotide pool, thus preventing their incorporation into DNA/RNA and avoiding chromosomal lesions. In Staphylococcus aureus (strain COL), this protein is dITP/XTP pyrophosphatase.